A 263-amino-acid chain; its full sequence is Pyruvate formate-lyase-activating enzyme (263 aa).

In terms of domain architecture, Radical SAM core spans 23 to 260 (VDGPGIRFVV…TETYEEYKKR (238 aa)). Residues C37, C41, and C44 each contribute to the [4Fe-4S] cluster site. S-adenosyl-L-methionine contacts are provided by residues 43 to 45 (YCH), G87, 142 to 144 (DIK), and H215.

It belongs to the organic radical-activating enzymes family. Requires [4Fe-4S] cluster as cofactor.

It is found in the cytoplasm. It catalyses the reaction glycyl-[formate C-acetyltransferase] + reduced [flavodoxin] + S-adenosyl-L-methionine = glycin-2-yl radical-[formate C-acetyltransferase] + semiquinone [flavodoxin] + 5'-deoxyadenosine + L-methionine + H(+). Activation of pyruvate formate-lyase under anaerobic conditions by generation of an organic free radical, using S-adenosylmethionine and reduced flavodoxin as cosubstrates to produce 5'-deoxy-adenosine. The sequence is that of Pyruvate formate-lyase-activating enzyme (act) from Streptococcus mutans serotype c (strain ATCC 700610 / UA159).